The primary structure comprises 386 residues: MNTLGRLFRVTTWGESHGPALGAVVDGCPAGLPLSEDDVQRELDRRRPGQSGVSTPRSERDRVEILSGVHEGRTLGTPISMIVWNEDVDSSKYEPIRTRPRPGHADVTYRWKYGHVDYRGGGRASGRTTVGIVMGGAVAKKLLREAPSNDPLGIEIVGHVVRVGSVEADPGDLSAEEIMQYAESNPVRCADPDAAEEMLGEIERARENGDSVGGTIEVIAENVPPGLGDPVFGRLDGELAGALMNIPAVKAVEVGSGVRCSEMHGSEHNDPIWWDGHPVVDGDNSGGVLGGISHGGRLVVRVHVKPTPSVSVPQRTVDLESEEEVEIEVEGRHDPCICPRAVPVAESVVAIVLADAVLRAGYVNPDSVELPAASVEDRWRTLKRHL.

The interval 32–60 (LPLSEDDVQRELDRRRPGQSGVSTPRSER) is disordered. Positions 38–47 (DVQRELDRRR) are enriched in basic and acidic residues. R46 is an NADP(+) binding site. FMN is bound by residues 123 to 125 (RAS), G290, 305 to 309 (KPTPS), and R332.

It belongs to the chorismate synthase family. It depends on FMNH2 as a cofactor.

The catalysed reaction is 5-O-(1-carboxyvinyl)-3-phosphoshikimate = chorismate + phosphate. It functions in the pathway metabolic intermediate biosynthesis; chorismate biosynthesis; chorismate from D-erythrose 4-phosphate and phosphoenolpyruvate: step 7/7. In terms of biological role, catalyzes the anti-1,4-elimination of the C-3 phosphate and the C-6 proR hydrogen from 5-enolpyruvylshikimate-3-phosphate (EPSP) to yield chorismate, which is the branch point compound that serves as the starting substrate for the three terminal pathways of aromatic amino acid biosynthesis. This reaction introduces a second double bond into the aromatic ring system. The protein is Chorismate synthase of Methanopyrus kandleri (strain AV19 / DSM 6324 / JCM 9639 / NBRC 100938).